Reading from the N-terminus, the 780-residue chain is Protein SAV (780 aa).

Residues 253–260 (GPPGTGKT) and 528–535 (GPPGTGKT) each bind ATP.

It belongs to the AAA ATPase family. CDC48 subfamily.

Its function is as follows. Not yet known, shows ATPase activity. The protein is Protein SAV (sav) of Sulfolobus acidocaldarius (strain ATCC 33909 / DSM 639 / JCM 8929 / NBRC 15157 / NCIMB 11770).